Here is a 655-residue protein sequence, read N- to C-terminus: p-hydroxybenzoic acid efflux pump subunit AaeB (655 aa).

11 helical membrane-spanning segments follow: residues 13–33 (FAVK…HFQL), 38–58 (WAVL…GGEP), 69–89 (LRII…ISMI), 93–113 (LLMI…SSLV), 121–141 (WGLS…EPLL), 152–172 (EIVI…PRSI), 370–390 (LFWL…IAVV), 407–427 (FIYG…VIIP), 431–451 (QSML…GIEV), 459–479 (MGAL…TFHF), and 482–502 (FLDS…VILL).

Belongs to the aromatic acid exporter ArAE (TC 2.A.85) family.

It localises to the cell inner membrane. Functionally, forms an efflux pump with AaeA. Could function as a metabolic relief valve, allowing to eliminate certain compounds when they accumulate to high levels in the cell. The protein is p-hydroxybenzoic acid efflux pump subunit AaeB of Salmonella agona (strain SL483).